A 289-amino-acid polypeptide reads, in one-letter code: MSTYLIGDIHGCLDELLALLAQVNFDPQQDTLWLTGDLVARGPASLDVLRYVRSLGPAVRMVLGNHDLHLLAVYAGISRNKPKDRITPLLDAPDADELINWLRRQPVLQVDDQLKLIMAHAGITPQWDIETAKMCAREVEAVLSSDSYPLFLDAMYGDMPNNWSPELTGLARLRFSTNALTRMRFCFPNGQLDMICKDTPENAPAPLKPWFDLPRLVDPEYSIIFGHWASLEGKGVPEGIYGLDTGCCWGGDLTLLRWEDKRYFTQRAFKAEAEINNNNGFAAGKEVQH.

The protein belongs to the Ap4A hydrolase family.

The enzyme catalyses P(1),P(4)-bis(5'-adenosyl) tetraphosphate + H2O = 2 ADP + 2 H(+). In terms of biological role, hydrolyzes diadenosine 5',5'''-P1,P4-tetraphosphate to yield ADP. This is Bis(5'-nucleosyl)-tetraphosphatase, symmetrical from Yersinia pseudotuberculosis serotype O:1b (strain IP 31758).